A 353-amino-acid chain; its full sequence is Cyclin-dependent kinase-like 1 (353 aa).

Positions 4 to 286 constitute a Protein kinase domain; sequence YDRLSKLGEG…CSELMLHGIF (283 aa). ATP-binding positions include 10 to 18 and Lys-33; that span reads LGEGSYGVV. Asp-126 serves as the catalytic Proton acceptor. The disordered stretch occupies residues 331 to 353; that stretch reads GGNHGNNNNNGNGINRNFLPTIS. Residues 335–347 show a composition bias toward low complexity; sequence GNNNNNGNGINRN.

The protein belongs to the protein kinase superfamily. Ser/Thr protein kinase family. In terms of tissue distribution, specifically expressed in head and tail ciliated sensory neurons.

It is found in the cell projection. Its subcellular location is the cilium. It carries out the reaction L-seryl-[protein] + ATP = O-phospho-L-seryl-[protein] + ADP + H(+). The enzyme catalyses L-threonyl-[protein] + ATP = O-phospho-L-threonyl-[protein] + ADP + H(+). Modulates cilium assembly. The protein is Cyclin-dependent kinase-like 1 of Caenorhabditis elegans.